Reading from the N-terminus, the 122-residue chain is Large ribosomal subunit protein uL14 (122 aa).

It belongs to the universal ribosomal protein uL14 family. Part of the 50S ribosomal subunit. Forms a cluster with proteins L3 and L19. In the 70S ribosome, L14 and L19 interact and together make contacts with the 16S rRNA in bridges B5 and B8.

Binds to 23S rRNA. Forms part of two intersubunit bridges in the 70S ribosome. The protein is Large ribosomal subunit protein uL14 of Carsonella ruddii (strain PV).